A 187-amino-acid chain; its full sequence is uncharacterized protein (187 aa).

A lipid anchor (N-myristoyl glycine; by host) is attached at G2.

Belongs to the mimivirus L332/L333/L334 family.

This is an uncharacterized protein from Acanthamoeba polyphaga (Amoeba).